Here is a 194-residue protein sequence, read N- to C-terminus: Leucyl/phenylalanyl-tRNA--protein transferase (194 aa).

This sequence belongs to the L/F-transferase family.

It localises to the cytoplasm. It carries out the reaction N-terminal L-lysyl-[protein] + L-leucyl-tRNA(Leu) = N-terminal L-leucyl-L-lysyl-[protein] + tRNA(Leu) + H(+). It catalyses the reaction N-terminal L-arginyl-[protein] + L-leucyl-tRNA(Leu) = N-terminal L-leucyl-L-arginyl-[protein] + tRNA(Leu) + H(+). The enzyme catalyses L-phenylalanyl-tRNA(Phe) + an N-terminal L-alpha-aminoacyl-[protein] = an N-terminal L-phenylalanyl-L-alpha-aminoacyl-[protein] + tRNA(Phe). Its function is as follows. Functions in the N-end rule pathway of protein degradation where it conjugates Leu, Phe and, less efficiently, Met from aminoacyl-tRNAs to the N-termini of proteins containing an N-terminal arginine or lysine. The chain is Leucyl/phenylalanyl-tRNA--protein transferase from Chlorobaculum parvum (strain DSM 263 / NCIMB 8327) (Chlorobium vibrioforme subsp. thiosulfatophilum).